The sequence spans 145 residues: Large ribosomal subunit protein uL11 (145 aa).

This sequence belongs to the universal ribosomal protein uL11 family. In terms of assembly, part of the ribosomal stalk of the 50S ribosomal subunit. Interacts with L10 and the large rRNA to form the base of the stalk. L10 forms an elongated spine to which L12 dimers bind in a sequential fashion forming a multimeric L10(L12)X complex. Post-translationally, one or more lysine residues are methylated.

Functionally, forms part of the ribosomal stalk which helps the ribosome interact with GTP-bound translation factors. In Sulfurihydrogenibium sp. (strain YO3AOP1), this protein is Large ribosomal subunit protein uL11.